A 429-amino-acid chain; its full sequence is Serine carboxypeptidase-like (429 aa).

3 cysteine pairs are disulfide-bonded: Cys-58/Cys-298, Cys-226/Cys-241, and Cys-264/Cys-269. N-linked (GlcNAc...) asparagine glycosylation occurs at Asn-76. Residue Ser-148 is part of the active site. Asp-336 is a catalytic residue. Cys-339 contributes to the substrate binding site. His-393 is an active-site residue. N-linked (GlcNAc...) asparagine glycans are attached at residues Asn-414 and Asn-417.

It belongs to the peptidase S10 family. In terms of tissue distribution, abundant in germinated embryos composed of leaf, root, and scutellum.

The protein is Serine carboxypeptidase-like (CBP31) of Oryza sativa subsp. japonica (Rice).